A 196-amino-acid polypeptide reads, in one-letter code: MLERIKGCFTESIQTQIAAAEALPDAISCAAMALVQSLLNGNKILCCGNGTSAANAQHFAASMINRFETERPSLPAIALNADNVVLTAITNDRLHDEVYAKQVRALGQAGDVLLAISTRGNSRDIVKAVEAAVTRDMTIVALTGYDGGELAGLLGQLDVEIRIPSHRGARVQELHMLTVNCLCDLIDNTLFPHQND.

The 163-residue stretch at 34-196 folds into the SIS domain; it reads LVQSLLNGNK…DNTLFPHQND (163 aa).

The protein belongs to the SIS family. DiaA subfamily. As to quaternary structure, homotetramer; dimer of dimers.

Required for the timely initiation of chromosomal replication via direct interactions with the DnaA initiator protein. The chain is DnaA initiator-associating protein DiaA from Yersinia pestis bv. Antiqua (strain Antiqua).